We begin with the raw amino-acid sequence, 224 residues long: UPF0758 protein Avin_02940 (224 aa).

Residues 102–224 form the MPN domain; that stretch reads ALESPQAVRD…PLSMAEQGWL (123 aa). H173, H175, and D186 together coordinate Zn(2+). The short motif at 173 to 186 is the JAMM motif element; sequence HNHPSGIAEPSQAD.

Belongs to the UPF0758 family.

The chain is UPF0758 protein Avin_02940 from Azotobacter vinelandii (strain DJ / ATCC BAA-1303).